Consider the following 312-residue polypeptide: MANRTVKDAHSVHGTNPQYLVEKIIRTRIYESKYWKEECFGLTAELVVDKAMELKFVGGVYGGNIKPTPFLCLTLKMLQIQPEKDIIVEFIKNEDFKYVRALGALYMRLTGTATDCYKYLEPLYNDYRKVKVQNRDGEFELMHVDEFIDQLLHEERVCDVILPRLQKRFVLEETEQLDPRVSALEEDMDDVESSEEEEDDDEKGRDPSPEHHRRNYRDLDRPRRSPSPRYRRSRSRSPRRRSRSPKRRSPSPPRRERHRSKSPRRHRSRSRERRHRSKSKSPGHHRSHRHRSHSKSPERSKKSHKKSRRGNE.

The interval 1-179 (MANRTVKDAH…VLEETEQLDP (179 aa)) is N-terminal protein interaction domain. The segment at 180 to 312 (RVSALEEDMD…SHKKSRRGNE (133 aa)) is disordered. Residues 184–201 (LEEDMDDVESSEEEEDDD) show a composition bias toward acidic residues. Positions 202–223 (EKGRDPSPEHHRRNYRDLDRPR) are enriched in basic and acidic residues. 2 stretches are compositionally biased toward basic residues: residues 224–294 (RSPS…RSHS) and 301–312 (KKSHKKSRRGNE).

Belongs to the PRP38 family. As to quaternary structure, component of the spliceosome B complex.

Its subcellular location is the nucleus. Functionally, involved in pre-mRNA splicing as a component of the spliceosome. This chain is Pre-mRNA-splicing factor 38A (prpf38a), found in Xenopus laevis (African clawed frog).